The chain runs to 563 residues: Ataxin-10 homolog (563 aa).

Threonine 433 is modified (phosphothreonine). Residues 544-563 are disordered; it reads VSKEEDPGNENSEIISIDED. The residue at position 559 (serine 559) is a Phosphoserine.

It belongs to the ataxin-10 family.

The protein localises to the cytoplasm. Functionally, may play a role in the regulation of cytokinesis. This Saccharomyces cerevisiae (strain ATCC 204508 / S288c) (Baker's yeast) protein is Ataxin-10 homolog (CTR86).